Consider the following 468-residue polypeptide: Glutamate--tRNA ligase (468 aa).

Residues 8-18 carry the 'HIGH' region motif; it reads PSPTGFLHVGG. Residues C97, C99, C124, and D126 each contribute to the Zn(2+) site. Positions 236-240 match the 'KMSKS' region motif; the sequence is KLSKR. ATP is bound at residue K239.

Belongs to the class-I aminoacyl-tRNA synthetase family. Glutamate--tRNA ligase type 1 subfamily. Monomer. Zn(2+) is required as a cofactor.

Its subcellular location is the cytoplasm. The enzyme catalyses tRNA(Glu) + L-glutamate + ATP = L-glutamyl-tRNA(Glu) + AMP + diphosphate. Its function is as follows. Catalyzes the attachment of glutamate to tRNA(Glu) in a two-step reaction: glutamate is first activated by ATP to form Glu-AMP and then transferred to the acceptor end of tRNA(Glu). The polypeptide is Glutamate--tRNA ligase (Francisella tularensis subsp. novicida (strain U112)).